A 119-amino-acid chain; its full sequence is MKPRAVALVAGGGFAGALCRHGIAVVLPGTFPWGTLVVNVAGAFLLGAIVYGTERLRSVPESTRLVVATGFLSSFTTYSTFAGETIALAPRLAALNVVGNYALGFVAVLVAREVIRWRS.

Transmembrane regions (helical) follow at residues 6–26 (VALVAGGGFAGALCRHGIAVV), 31–51 (FPWGTLVVNVAGAFLLGAIVY), 66–86 (VVATGFLSSFTTYSTFAGETI), and 91–111 (RLAALNVVGNYALGFVAVLVA).

This sequence belongs to the fluoride channel Fluc/FEX (TC 1.A.43) family.

The protein resides in the cell membrane. The catalysed reaction is fluoride(in) = fluoride(out). Its function is as follows. Fluoride-specific ion channel. Important for reducing fluoride concentration in the cell, thus reducing its toxicity. This Natronomonas pharaonis (strain ATCC 35678 / DSM 2160 / CIP 103997 / JCM 8858 / NBRC 14720 / NCIMB 2260 / Gabara) (Halobacterium pharaonis) protein is Fluoride-specific ion channel FluC 1.